A 98-amino-acid chain; its full sequence is Ferredoxin-3 (98 aa).

4Fe-4S ferredoxin-type domains are found at residues Phe18–Leu47 and Val66–Leu95. 8 residues coordinate [4Fe-4S] cluster: Cys27, Cys30, Cys33, Cys37, Cys75, Cys78, Cys81, and Cys85.

As to quaternary structure, homodimer. The cofactor is [4Fe-4S] cluster.

Ferredoxins are iron-sulfur proteins that transfer electrons in a wide variety of metabolic reactions. The sequence is that of Ferredoxin-3 (fdxB) from Trichormus variabilis (strain ATCC 29413 / PCC 7937) (Anabaena variabilis).